Reading from the N-terminus, the 163-residue chain is Ribosome maturation factor RimM (163 aa).

The PRC barrel domain occupies 92-162; the sequence is EDEFYVADLV…AGRAVVRPPE (71 aa).

Belongs to the RimM family. In terms of assembly, binds ribosomal protein uS19.

The protein localises to the cytoplasm. Its function is as follows. An accessory protein needed during the final step in the assembly of 30S ribosomal subunit, possibly for assembly of the head region. Essential for efficient processing of 16S rRNA. May be needed both before and after RbfA during the maturation of 16S rRNA. It has affinity for free ribosomal 30S subunits but not for 70S ribosomes. The chain is Ribosome maturation factor RimM from Rubrobacter xylanophilus (strain DSM 9941 / JCM 11954 / NBRC 16129 / PRD-1).